The sequence spans 338 residues: NAD kinase (338 aa).

Aspartate 66 serves as the catalytic Proton acceptor. Residues 66-67, arginine 71, 141-142, lysine 152, aspartate 171, 182-187, and alanine 206 each bind NAD(+); these read DG, ND, and TAYAFS. Positions 317–338 are disordered; sequence GDAGVAGTEPDKPGERDGKAGA. Positions 325-338 are enriched in basic and acidic residues; it reads EPDKPGERDGKAGA.

Belongs to the NAD kinase family. A divalent metal cation serves as cofactor.

The protein resides in the cytoplasm. It carries out the reaction NAD(+) + ATP = ADP + NADP(+) + H(+). Its function is as follows. Involved in the regulation of the intracellular balance of NAD and NADP, and is a key enzyme in the biosynthesis of NADP. Catalyzes specifically the phosphorylation on 2'-hydroxyl of the adenosine moiety of NAD to yield NADP. The polypeptide is NAD kinase (Bifidobacterium longum subsp. infantis (strain ATCC 15697 / DSM 20088 / JCM 1222 / NCTC 11817 / S12)).